The following is a 182-amino-acid chain: Transcription termination/antitermination protein NusG (182 aa).

One can recognise a KOW domain in the interval 131 to 163 (VGEQVRIQSGPFANQIGEVQEIEADKFKLTVLV).

The protein belongs to the NusG family.

Functionally, participates in transcription elongation, termination and antitermination. This Staphylococcus epidermidis (strain ATCC 35984 / DSM 28319 / BCRC 17069 / CCUG 31568 / BM 3577 / RP62A) protein is Transcription termination/antitermination protein NusG.